The following is a 501-amino-acid chain: Glycerol kinase 1 (501 aa).

An ADP-binding site is contributed by Thr-16. The ATP site is built by Thr-16, Thr-17, and Ser-18. Thr-16 contributes to the sn-glycerol 3-phosphate binding site. Arg-20 is a binding site for ADP. The sn-glycerol 3-phosphate site is built by Arg-84, Glu-85, Tyr-135, and Asp-242. Positions 84, 85, 135, 242, and 243 each coordinate glycerol. Positions 264 and 307 each coordinate ADP. The ATP site is built by Thr-264, Gly-307, Gln-311, and Gly-408. Gly-408 provides a ligand contact to ADP.

It belongs to the FGGY kinase family.

It carries out the reaction glycerol + ATP = sn-glycerol 3-phosphate + ADP + H(+). The protein operates within polyol metabolism; glycerol degradation via glycerol kinase pathway; sn-glycerol 3-phosphate from glycerol: step 1/1. Functionally, key enzyme in the regulation of glycerol uptake and metabolism. Catalyzes the phosphorylation of glycerol to yield sn-glycerol 3-phosphate. The sequence is that of Glycerol kinase 1 from Saccharolobus solfataricus (strain ATCC 35092 / DSM 1617 / JCM 11322 / P2) (Sulfolobus solfataricus).